Reading from the N-terminus, the 1378-residue chain is Carboxypeptidase D (1378 aa).

The first 37 residues, 1–37 (MASGWDERPPWRLESLRLLPPPPLLLLLLLLRSSAQA), serve as a signal peptide directing secretion. Topologically, residues 38 to 1297 (AHIKKAEATT…DNRIFGLPRE (1260 aa)) are extracellular. One can recognise a Peptidase M14 1 domain in the interval 62-380 (HYYHEAALGE…ESLITLIEKV (319 aa)). Zn(2+) contacts are provided by histidine 139 and glutamate 142. The short motif at 162–164 (RGD) is the Cell attachment site element. Residues asparagine 172 and asparagine 217 are each glycosylated (N-linked (GlcNAc...) asparagine). The disordered stretch occupies residues 189–232 (RAREGDCGLGDSGPPGTSGRDNSRGRDLNRSFPDQFSTGEPPSL). Histidine 257 contributes to the Zn(2+) binding site. Phosphotyrosine is present on tyrosine 265. The residue at position 270 (serine 270) is a Phosphoserine. The active-site Proton donor/acceptor is glutamate 350. Residues asparagine 399, asparagine 410, asparagine 429, and asparagine 522 are each glycosylated (N-linked (GlcNAc...) asparagine). In terms of domain architecture, Peptidase M14 2 spans 502–792 (HHHHFPDMEI…RSLIQFMKQV (291 aa)). Zn(2+) contacts are provided by histidine 564 and glutamate 567. Asparagine 626 carries an N-linked (GlcNAc...) asparagine glycan. Histidine 671 provides a ligand contact to Zn(2+). The Proton donor/acceptor role is filled by glutamate 762. Asparagine 811, asparagine 855, asparagine 867, asparagine 879, asparagine 953, and asparagine 976 each carry an N-linked (GlcNAc...) asparagine glycan. Residues 875-898 (TDANNESKKGKGHSTSTDDTSDPT) are disordered. The 280-residue stretch at 930–1209 (RYHSYKDLSE…KSLLSMLVEV (280 aa)) folds into the Peptidase M14 3 domain. The span at 1039 to 1048 (RERAQEKDCT) shows a compositional bias: basic and acidic residues. Residues 1039 to 1068 (RERAQEKDCTSKTGHTNARGRDLDTDFTSN) are disordered. Residues asparagine 1068 and asparagine 1140 are each glycosylated (N-linked (GlcNAc...) asparagine). A helical membrane pass occupies residues 1298 to 1318 (LVVTVSGATMSALILTACIIW). Residues cysteine 1315, cysteine 1319, and cysteine 1321 are each lipidated (S-palmitoyl cysteine). Residues 1319 to 1378 (CICSIKSNRHKDGFHRLRQHHDEYEDEIRMMSTGSKKSLLSHEFQDETDTEEETLYSSKH) are Cytoplasmic-facing. A phosphoserine mark is found at serine 1356 and serine 1359. The tract at residues 1357–1378 (LLSHEFQDETDTEEETLYSSKH) is disordered. Phosphothreonine occurs at positions 1366 and 1368.

The protein belongs to the peptidase M14 family. Zn(2+) serves as cofactor. As to expression, isoform 1 is widely expressed with highest levels in the hippocampus, spinal cord, atrium, colon, testis and ovaries. Detected in the liver of females but not males. Isoform 2 is not detected in brain or lung.

It is found in the cell membrane. Its subcellular location is the nucleus. The enzyme catalyses Releases C-terminal Arg and Lys from polypeptides.. In Rattus norvegicus (Rat), this protein is Carboxypeptidase D.